The sequence spans 323 residues: 4-hydroxy-3-methylbut-2-enyl diphosphate reductase (323 aa).

Cys-13 provides a ligand contact to [4Fe-4S] cluster. His-42 and His-75 together coordinate (2E)-4-hydroxy-3-methylbut-2-enyl diphosphate. The dimethylallyl diphosphate site is built by His-42 and His-75. His-42 and His-75 together coordinate isopentenyl diphosphate. Cys-97 contributes to the [4Fe-4S] cluster binding site. His-125 is a (2E)-4-hydroxy-3-methylbut-2-enyl diphosphate binding site. His-125 is a binding site for dimethylallyl diphosphate. Position 125 (His-125) interacts with isopentenyl diphosphate. Glu-127 serves as the catalytic Proton donor. Position 168 (Thr-168) interacts with (2E)-4-hydroxy-3-methylbut-2-enyl diphosphate. Cys-198 contributes to the [4Fe-4S] cluster binding site. (2E)-4-hydroxy-3-methylbut-2-enyl diphosphate is bound by residues Ser-226, Ser-227, Asn-228, and Ser-270. Dimethylallyl diphosphate-binding residues include Ser-226, Ser-227, Asn-228, and Ser-270. Positions 226, 227, 228, and 270 each coordinate isopentenyl diphosphate.

Belongs to the IspH family. [4Fe-4S] cluster serves as cofactor.

The enzyme catalyses isopentenyl diphosphate + 2 oxidized [2Fe-2S]-[ferredoxin] + H2O = (2E)-4-hydroxy-3-methylbut-2-enyl diphosphate + 2 reduced [2Fe-2S]-[ferredoxin] + 2 H(+). The catalysed reaction is dimethylallyl diphosphate + 2 oxidized [2Fe-2S]-[ferredoxin] + H2O = (2E)-4-hydroxy-3-methylbut-2-enyl diphosphate + 2 reduced [2Fe-2S]-[ferredoxin] + 2 H(+). Its pathway is isoprenoid biosynthesis; dimethylallyl diphosphate biosynthesis; dimethylallyl diphosphate from (2E)-4-hydroxy-3-methylbutenyl diphosphate: step 1/1. It participates in isoprenoid biosynthesis; isopentenyl diphosphate biosynthesis via DXP pathway; isopentenyl diphosphate from 1-deoxy-D-xylulose 5-phosphate: step 6/6. Functionally, catalyzes the conversion of 1-hydroxy-2-methyl-2-(E)-butenyl 4-diphosphate (HMBPP) into a mixture of isopentenyl diphosphate (IPP) and dimethylallyl diphosphate (DMAPP). Acts in the terminal step of the DOXP/MEP pathway for isoprenoid precursor biosynthesis. The sequence is that of 4-hydroxy-3-methylbut-2-enyl diphosphate reductase from Nitrosomonas europaea (strain ATCC 19718 / CIP 103999 / KCTC 2705 / NBRC 14298).